The primary structure comprises 103 residues: Integration host factor subunit alpha (103 aa).

A disordered region spans residues 55 to 74 (CREKPQRPGRNPKTGEEMPI).

This sequence belongs to the bacterial histone-like protein family. Heterodimer of an alpha and a beta chain.

Its function is as follows. This protein is one of the two subunits of integration host factor, a specific DNA-binding protein that functions in genetic recombination as well as in transcriptional and translational control. The protein is Integration host factor subunit alpha of Thiobacillus denitrificans (strain ATCC 25259 / T1).